The following is a 307-amino-acid chain: Ribonuclease HII (307 aa).

The region spanning 44–235 (EPVAGVDEAG…VRRAGGRMEL (192 aa)) is the RNase H type-2 domain. Residues Asp-50, Glu-51, and Asp-144 each contribute to the a divalent metal cation site. Residues 241–307 (ADSDDSPGFA…SRPAELLEIP (67 aa)) are disordered. Over residues 250-280 (ASGPAEAVPGPAGSAGAASAAARPAAAGPAG) the composition is skewed to low complexity. Residues 287–296 (RAADLRDNGD) show a composition bias toward basic and acidic residues.

This sequence belongs to the RNase HII family. The cofactor is Mn(2+). Requires Mg(2+) as cofactor.

It is found in the cytoplasm. The catalysed reaction is Endonucleolytic cleavage to 5'-phosphomonoester.. Functionally, endonuclease that specifically degrades the RNA of RNA-DNA hybrids. This chain is Ribonuclease HII, found in Acidothermus cellulolyticus (strain ATCC 43068 / DSM 8971 / 11B).